The chain runs to 487 residues: 3-octaprenyl-4-hydroxybenzoate carboxy-lyase (487 aa).

Asn172 is a binding site for Mn(2+). Residues 175–177 (IYR), 189–191 (RWL), and 194–195 (RG) each bind prenylated FMN. Mn(2+) is bound at residue Glu238. Catalysis depends on Asp287, which acts as the Proton donor.

It belongs to the UbiD family. Homohexamer. The cofactor is prenylated FMN. Requires Mn(2+) as cofactor.

Its subcellular location is the cell membrane. It carries out the reaction a 4-hydroxy-3-(all-trans-polyprenyl)benzoate + H(+) = a 2-(all-trans-polyprenyl)phenol + CO2. It participates in cofactor biosynthesis; ubiquinone biosynthesis. Catalyzes the decarboxylation of 3-octaprenyl-4-hydroxy benzoate to 2-octaprenylphenol, an intermediate step in ubiquinone biosynthesis. The sequence is that of 3-octaprenyl-4-hydroxybenzoate carboxy-lyase from Nitrosomonas europaea (strain ATCC 19718 / CIP 103999 / KCTC 2705 / NBRC 14298).